A 630-amino-acid polypeptide reads, in one-letter code: Probable potassium transport system protein Kup 1 (630 aa).

The next 12 membrane-spanning stretches (helical) occupy residues 15-35 (LLAMALGSVGVVYGDIGTSPL), 58-78 (LISLMIWALTIIVTIKYVLFL), 104-124 (TAILFFMGIAGAALFIGDAMI), 142-162 (PALSDYVVPIAVVILLFLFAV), 173-193 (FFGPITLVWFLVMGAVGFMHI), 208-228 (AVAFLFNEGYVGIVVLGAVFL), 252-272 (WFTVVFPALTLNYLGQGAFVL), 290-310 (ALLPAVILATAATIIASQAVI), 342-362 (IYLPNVNTLLMFGVMALVFIF), 368-388 (LATAYGISVTGAMVVTTVLAF), 399-419 (AWWAAGVLLPLFALELVFLGA), and 424-444 (IHDGGYVPILIAATFIVIMWT).

This sequence belongs to the HAK/KUP transporter (TC 2.A.72) family.

It is found in the cell inner membrane. It catalyses the reaction K(+)(in) + H(+)(in) = K(+)(out) + H(+)(out). In terms of biological role, transport of potassium into the cell. Likely operates as a K(+):H(+) symporter. The sequence is that of Probable potassium transport system protein Kup 1 from Sinorhizobium medicae (strain WSM419) (Ensifer medicae).